The chain runs to 132 residues: Phosphomevalonate dehydratase small subunit (132 aa).

The active-site Proton acceptor is S58.

This sequence belongs to the AcnX type II small subunit family. Heterodimer composed of a large subunit (PMDh-L) and a small subunit (PMDh-S).

The catalysed reaction is (R)-5-phosphomevalonate = (2E)-3-methyl-5-phosphooxypent-2-enoate + H2O. It functions in the pathway isoprenoid biosynthesis; isopentenyl diphosphate biosynthesis via mevalonate pathway. Its activity is regulated as follows. Neither the addition of 1 mM Mg(2+) nor 1 mM Mn(2+) has a significant effect on the activity, whereas Zn(2+) causes almost complete inactivation. Strongly inhibited by H(2)O(2), but not by EDTA or iodoacetamide. Functionally, component of a hydro-lyase that catalyzes the dehydration of mevalonate 5-phosphate (MVA5P) to form trans-anhydromevalonate 5-phosphate (tAHMP). Involved in the archaeal mevalonate (MVA) pathway, which provides fundamental precursors for isoprenoid biosynthesis, such as isopentenyl diphosphate (IPP) and dimethylallyl diphosphate (DMAPP). This chain is Phosphomevalonate dehydratase small subunit, found in Aeropyrum pernix (strain ATCC 700893 / DSM 11879 / JCM 9820 / NBRC 100138 / K1).